The sequence spans 340 residues: Ketol-acid reductoisomerase (NADP(+)) (340 aa).

The 182-residue stretch at 1–182 (MRVYYDRDCD…GGGRSGIIET (182 aa)) folds into the KARI N-terminal Rossmann domain. NADP(+) contacts are provided by residues 24–27 (YGSQ), R48, S51, S53, and 83–86 (DELQ). H108 is an active-site residue. G134 lines the NADP(+) pocket. The KARI C-terminal knotted domain occupies 183 to 329 (NFREECETDL…AKLREMMPWI (147 aa)). Mg(2+)-binding residues include D191, E195, E227, and E231. S252 serves as a coordination point for substrate.

It belongs to the ketol-acid reductoisomerase family. Requires Mg(2+) as cofactor.

The enzyme catalyses (2R)-2,3-dihydroxy-3-methylbutanoate + NADP(+) = (2S)-2-acetolactate + NADPH + H(+). The catalysed reaction is (2R,3R)-2,3-dihydroxy-3-methylpentanoate + NADP(+) = (S)-2-ethyl-2-hydroxy-3-oxobutanoate + NADPH + H(+). The protein operates within amino-acid biosynthesis; L-isoleucine biosynthesis; L-isoleucine from 2-oxobutanoate: step 2/4. It functions in the pathway amino-acid biosynthesis; L-valine biosynthesis; L-valine from pyruvate: step 2/4. In terms of biological role, involved in the biosynthesis of branched-chain amino acids (BCAA). Catalyzes an alkyl-migration followed by a ketol-acid reduction of (S)-2-acetolactate (S2AL) to yield (R)-2,3-dihydroxy-isovalerate. In the isomerase reaction, S2AL is rearranged via a Mg-dependent methyl migration to produce 3-hydroxy-3-methyl-2-ketobutyrate (HMKB). In the reductase reaction, this 2-ketoacid undergoes a metal-dependent reduction by NADPH to yield (R)-2,3-dihydroxy-isovalerate. The chain is Ketol-acid reductoisomerase (NADP(+)) from Ruegeria sp. (strain TM1040) (Silicibacter sp.).